Here is a 652-residue protein sequence, read N- to C-terminus: DNA ligase (652 aa).

NAD(+) is bound by residues 29 to 33, 78 to 79, and glutamate 107; these read DAEYD and SL. Lysine 109 acts as the N6-AMP-lysine intermediate in catalysis. NAD(+) contacts are provided by arginine 130, glutamate 164, lysine 278, and lysine 302. Residues cysteine 395, cysteine 398, cysteine 413, and cysteine 418 each contribute to the Zn(2+) site. Positions 577–652 constitute a BRCT domain; it reads TDDAILSGKT…VKDEAWLLDL (76 aa).

Belongs to the NAD-dependent DNA ligase family. LigA subfamily. Mg(2+) serves as cofactor. It depends on Mn(2+) as a cofactor.

It catalyses the reaction NAD(+) + (deoxyribonucleotide)n-3'-hydroxyl + 5'-phospho-(deoxyribonucleotide)m = (deoxyribonucleotide)n+m + AMP + beta-nicotinamide D-nucleotide.. DNA ligase that catalyzes the formation of phosphodiester linkages between 5'-phosphoryl and 3'-hydroxyl groups in double-stranded DNA using NAD as a coenzyme and as the energy source for the reaction. It is essential for DNA replication and repair of damaged DNA. This is DNA ligase from Streptococcus thermophilus (strain ATCC BAA-491 / LMD-9).